Reading from the N-terminus, the 412-residue chain is CHRNA7-FAM7A fusion protein (412 aa).

5 helical membrane-spanning segments follow: residues 144-164 (GLNL…VFLL), 172-192 (ISLG…VAEI), 205-225 (QYFA…VIVL), 240-254 (WTRV…WFLR), and 380-400 (LCLM…LMSA).

The protein belongs to the ligand-gated ion channel (TC 1.A.9) family. Expressed in hippocampus.

The protein localises to the membrane. The chain is CHRNA7-FAM7A fusion protein (CHRFAM7A) from Homo sapiens (Human).